The chain runs to 635 residues: Multiple inositol polyphosphate phosphatase 1 (635 aa).

The signal sequence occupies residues Met1–Ser23. Residues Leu24–Ser565 lie on the Extracellular side of the membrane. The tract at residues Lys66–Pro102 is disordered. Residues Asn67–Asn99 are compositionally biased toward low complexity. His116 is a catalytic residue. Residues Ser380–Asp421 are compositionally biased toward low complexity. The disordered stretch occupies residues Ser380–Glu425. Residues Tyr566–Phe586 traverse the membrane as a helical segment. Over Thr587–Gln635 the chain is Cytoplasmic. The segment covering Ser614 to Pro624 has biased composition (low complexity). Positions Ser614–Gln635 are disordered.

Belongs to the histidine acid phosphatase family. MINPP1 subfamily.

It is found in the membrane. It catalyses the reaction 1D-myo-inositol hexakisphosphate + H2O = 1D-myo-inositol 1,2,4,5,6-pentakisphosphate + phosphate. The enzyme catalyses 1D-myo-inositol 1,2,4,5,6-pentakisphosphate + H2O = 1D-myo-inositol 1,2,5,6-tetrakisphosphate + phosphate. The catalysed reaction is 1D-myo-inositol 1,2,5,6-tetrakisphosphate + H2O = 1D-myo-inositol 1,2,6-trisphosphate + phosphate. It carries out the reaction 1D-myo-inositol 1,2,6-trisphosphate + H2O = 1D-myo-inositol 1,2-bisphosphate + phosphate. It catalyses the reaction 1D-myo-inositol 1,2-bisphosphate + H2O = 1D-myo-inositol 2-phosphate + phosphate. The enzyme catalyses (2R)-2,3-bisphosphoglycerate + H2O = (2R)-2-phosphoglycerate + phosphate. Functionally, probable multiple inositol polyphosphate phosphatase that hydrolyzes 1D-myo-inositol 1,3,4,5,6-pentakisphosphate (InsP5[2OH]) and 1D-myo-inositol hexakisphosphate (InsP6) to a range of less phosphorylated inositol phosphates. This regulates the availability of these various small molecule second messengers and metal chelators which control many aspects of cell physiology. May have a dual substrate specificity, and function as a 2,3-bisphosphoglycerate 3-phosphatase hydrolyzing 2,3-bisphosphoglycerate to 2-phosphoglycerate. 2,3-bisphosphoglycerate (BPG) is formed as part of the Rapoport-Luebering glycolytic bypass. This is Multiple inositol polyphosphate phosphatase 1 (mipp1) from Dictyostelium discoideum (Social amoeba).